Here is a 314-residue protein sequence, read N- to C-terminus: UDP-N-acetylenolpyruvoylglucosamine reductase (314 aa).

In terms of domain architecture, FAD-binding PCMH-type spans 27–192 (KIGGKARYIV…LRAVFCLKFA (166 aa)). Arg171 is a catalytic residue. The active-site Proton donor is the Ser223. Glu293 is a catalytic residue.

It belongs to the MurB family. FAD serves as cofactor.

It localises to the cytoplasm. The enzyme catalyses UDP-N-acetyl-alpha-D-muramate + NADP(+) = UDP-N-acetyl-3-O-(1-carboxyvinyl)-alpha-D-glucosamine + NADPH + H(+). It participates in cell wall biogenesis; peptidoglycan biosynthesis. Functionally, cell wall formation. In Caldicellulosiruptor bescii (strain ATCC BAA-1888 / DSM 6725 / KCTC 15123 / Z-1320) (Anaerocellum thermophilum), this protein is UDP-N-acetylenolpyruvoylglucosamine reductase.